The following is a 299-amino-acid chain: Endonuclease 4 (299 aa).

The first 24 residues, 1–24 (MSSSLRQWFARVLVLTQLINGALC), serve as a signal peptide directing secretion. Residues Trp25 and His30 each contribute to the a divalent metal cation site. 25-30 (WGKEGH) lines the substrate pocket. An intrachain disulfide couples Cys34 to Cys65. A divalent metal cation contacts are provided by Asp69 and His84. Substrate is bound by residues 69–75 (DEIKHHW), 84–87 (HYVD), and 94–99 (NYEYCR). 3 disulfide bridges follow: Cys93–Cys246, Cys101–Cys111, and Cys226–Cys233. Residues Asn118 and Tyr136 each coordinate substrate. N-linked (GlcNAc...) asparagine glycosylation is present at Asn118. A glycan (N-linked (GlcNAc...) asparagine) is linked at Asn137. A divalent metal cation-binding residues include His147, Asp151, His157, His181, and Asp185. Positions 147 to 196 (HFIGDIHQPLHVGFLGDEGGNTITVRWYRRKTNLHHVWDNMIIESALKTY) are substrate binding. Asn198, Asn211, and Asn229 each carry an N-linked (GlcNAc...) asparagine glycan. Residues 284–299 (ATLNRIFSSKPKHAGS) constitute a propeptide, removed in mature form.

It belongs to the nuclease type I family. In terms of assembly, monomer. Mn(2+) is required as a cofactor. Ca(2+) serves as cofactor.

It catalyses the reaction Endonucleolytic cleavage to 5'-phosphomononucleotide and 5'-phosphooligonucleotide end-products.. In terms of biological role, endonuclease that can use single-stranded RNA and DNA as substrates. In contradiction with PubMed:23620482, cannot hydrolyze single-stranded DNA and does not cleave mismatches. In Arabidopsis thaliana (Mouse-ear cress), this protein is Endonuclease 4.